We begin with the raw amino-acid sequence, 219 residues long: Vacuolar protein sorting-associated protein 20 homolog 1 (219 aa).

The stretch at Ser20–Leu60 forms a coiled coil. A disordered region spans residues Pro171–Ala219. Positions Pro174–Leu186 are enriched in basic and acidic residues. A compositionally biased stretch (polar residues) spans Pro194 to Lys209.

It belongs to the SNF7 family. As to quaternary structure, component of the endosomal sorting required for transport complex III (ESCRT-III), composed at least of VPS2, VPS20, VPS24 and VPS32. Interacts with SKD1.

The protein localises to the endosome. In terms of biological role, component of the ESCRT-III complex, which is required for multivesicular bodies (MVBs) formation and sorting of endosomal cargo proteins into MVBs. The ESCRT-III complex is probably involved in the concentration of MVB cargo. This Arabidopsis thaliana (Mouse-ear cress) protein is Vacuolar protein sorting-associated protein 20 homolog 1 (VPS20.1).